The primary structure comprises 394 residues: Probable 6-phosphogluconolactonase ARB_02015 (394 aa).

Positions Met-1–Ala-21 are cleaved as a signal peptide. Asn-51 carries an N-linked (GlcNAc...) asparagine glycan.

It belongs to the cycloisomerase 2 family.

Its subcellular location is the secreted. It catalyses the reaction 6-phospho-D-glucono-1,5-lactone + H2O = 6-phospho-D-gluconate + H(+). The protein operates within carbohydrate degradation; pentose phosphate pathway; D-ribulose 5-phosphate from D-glucose 6-phosphate (oxidative stage): step 2/3. Its function is as follows. Catalyzes the hydrolysis of 6-phosphogluconolactone to 6-phosphogluconate. This is Probable 6-phosphogluconolactonase ARB_02015 from Arthroderma benhamiae (strain ATCC MYA-4681 / CBS 112371) (Trichophyton mentagrophytes).